Reading from the N-terminus, the 270-residue chain is MPELPEVETAKNGITPYLDGFYIEKIIVRQPKLRWEVSPELSQISHQKVTALSRRAKYLIIHTAQGYIIGHLGMSGAVRIVSPDSPVNKHDHLDIVMNNGKIMRYNDPRRFGAWFWTENLDEFPLFAKLGPEPLSGEFNSDYLFKKSRKKPTAVKSFIMNNAVVVGIGNIYANEVLFQCGLHPEKPAGKITKTQAALLTETIKKELTRAIAQGGTTLKDFLQPDGKPGYFVQELQIYGKKGCPCPKCGQKIESFTVGQRNSYVCLHCQKK.

The active-site Schiff-base intermediate with DNA is the Pro-2. Glu-3 functions as the Proton donor in the catalytic mechanism. Lys-57 functions as the Proton donor; for beta-elimination activity in the catalytic mechanism. DNA is bound by residues His-90, Arg-109, and Lys-150. The FPG-type zinc finger occupies 235-269; sequence QIYGKKGCPCPKCGQKIESFTVGQRNSYVCLHCQK. Arg-259 serves as the catalytic Proton donor; for delta-elimination activity.

The protein belongs to the FPG family. In terms of assembly, monomer. The cofactor is Zn(2+).

The catalysed reaction is Hydrolysis of DNA containing ring-opened 7-methylguanine residues, releasing 2,6-diamino-4-hydroxy-5-(N-methyl)formamidopyrimidine.. It carries out the reaction 2'-deoxyribonucleotide-(2'-deoxyribose 5'-phosphate)-2'-deoxyribonucleotide-DNA = a 3'-end 2'-deoxyribonucleotide-(2,3-dehydro-2,3-deoxyribose 5'-phosphate)-DNA + a 5'-end 5'-phospho-2'-deoxyribonucleoside-DNA + H(+). Its function is as follows. Involved in base excision repair of DNA damaged by oxidation or by mutagenic agents. Acts as a DNA glycosylase that recognizes and removes damaged bases. Has a preference for oxidized purines, such as 7,8-dihydro-8-oxoguanine (8-oxoG). Has AP (apurinic/apyrimidinic) lyase activity and introduces nicks in the DNA strand. Cleaves the DNA backbone by beta-delta elimination to generate a single-strand break at the site of the removed base with both 3'- and 5'-phosphates. The polypeptide is Formamidopyrimidine-DNA glycosylase (Actinobacillus succinogenes (strain ATCC 55618 / DSM 22257 / CCUG 43843 / 130Z)).